We begin with the raw amino-acid sequence, 524 residues long: Cytochrome P450 monooxygenase ATR4 (524 aa).

A helical membrane pass occupies residues 13–36 (IITYLDSLTWVGMALPLFSLCWAI). Residues N291, N444, and N454 are each glycosylated (N-linked (GlcNAc...) asparagine).

This sequence belongs to the cytochrome P450 family. The cofactor is heme.

It is found in the membrane. It functions in the pathway mycotoxin biosynthesis. Cytochrome P450 monooxygenase; part of the core atranone cluster (CAC) which products are predicted to catalyze most or all steps of mycotoxin atranone synthesis, starting from geranylgeranyl pyrophosphate (GGPP). The initial cyclization of GGPP to dolabellane is probably performed by the terpene cyclase ATR13. The Baeyer-Villiger oxidation near the end of the atranone synthesis, which converts atranones D and E to atranones F and G is predicted to be catalyzed by the monooxygenase ATR8. Of the CAC's other predicted gene products, the reducing PKS ATR6 might synthesize a polyketide chain. This polyketide is probably transferred onto the atranone backbone by the polyketide transferase ATR5. Other predicted CAC products include 4 oxygenases (ATR2, ATR3, ATR4, and ATR14), 3 short-chain reductases (ATR7, ATR9, and ATR10), and a methyltransferase (ATR12). These may all be involved in the various steps of atranone biosynthesis, although their specific roles must await experimental determination. The polypeptide is Cytochrome P450 monooxygenase ATR4 (Stachybotrys chlorohalonatus (strain IBT 40285)).